We begin with the raw amino-acid sequence, 337 residues long: MQAFVNRLWYPKGFLDTQSKGLFLLLKIIQLLLLPLSLLFAAITALRRSLFKIGIKKQSRLPVPVIVVGNITVGGSGKTPTVIYLVELLRRHGYQPGVISRGYGVNFEGVRSVLPSMAARDVGDEPAMIVGRTGVPMVIGRNRIDAGEHLLTHFNVDVIISDDGLQHYALGRDIELLILDGDRRFGNGSLLPAGPLREGLWRVKKVDAVVVNGGQSIEGEHAMSLVPSALKPVTHSNEQPPALNDAVVAIAGIGNPQRFFTSLINAGFNLNGVKAFEDHQAYCEEELTELCGDLPIIMTEKDAVKCRDFAKQNWWYLPVDAKLSSNFDRLILDKLKR.

72-79 (TVGGSGKT) serves as a coordination point for ATP.

Belongs to the LpxK family.

It carries out the reaction a lipid A disaccharide + ATP = a lipid IVA + ADP + H(+). It participates in glycolipid biosynthesis; lipid IV(A) biosynthesis; lipid IV(A) from (3R)-3-hydroxytetradecanoyl-[acyl-carrier-protein] and UDP-N-acetyl-alpha-D-glucosamine: step 6/6. Transfers the gamma-phosphate of ATP to the 4'-position of a tetraacyldisaccharide 1-phosphate intermediate (termed DS-1-P) to form tetraacyldisaccharide 1,4'-bis-phosphate (lipid IVA). This chain is Tetraacyldisaccharide 4'-kinase, found in Shewanella sediminis (strain HAW-EB3).